The primary structure comprises 557 residues: Probable WRKY transcription factor 20 (557 aa).

Residues 1 to 12 are compositionally biased toward basic and acidic residues; that stretch reads MNPQANDRKEFQ. Disordered regions lie at residues 1-36 and 76-215; these read MNPQ…GGGA and KPEP…DGYN. The span at 95–114 shows a compositional bias: polar residues; it reads SASSSSYTGRGFHQNTFTEQ. The segment covering 151–169 has biased composition (low complexity); sequence SSHSPSSISDAAGSSSELS. Over residues 193-207 the composition is skewed to polar residues; sequence SIQTSQNDSRGSTPS. Residues 205-269 constitute a DNA-binding region (WRKY 1); that stretch reads TPSILADDGY…YKGTHDHPKP (65 aa). Zn(2+) is bound by residues Cys236, Cys241, His264, and His266. Residues 257 to 348 are disordered; the sequence is DIIYKGTHDH…PDDDDPFSKR (92 aa). Basic and acidic residues predominate over residues 282-299; the sequence is QEERLDKYPSSTGRDEKG. The span at 303 to 314 shows a compositional bias: polar residues; that stretch reads YNLSNPNEQTGN. A compositionally biased stretch (low complexity) spans 321–332; it reads SASDDGGEAAAS. A DNA-binding region (WRKY 2) is located at residues 375 to 440; that stretch reads SEVDILDDGY…YEGKHDHDVP (66 aa). Zn(2+) is bound by residues Cys406, Cys411, His435, and His437. 2 disordered regions span residues 433–486 and 520–557; these read GKHD…QHQN and NQYG…QSGP. A compositionally biased stretch (polar residues) spans 520 to 536; sequence NQYGQRETKNETQNGDI.

Belongs to the WRKY group I family.

The protein resides in the nucleus. Functionally, transcription factor. Interacts specifically with the W box (5'-(T)TGAC[CT]-3'), a frequently occurring elicitor-responsive cis-acting element. The sequence is that of Probable WRKY transcription factor 20 (WRKY20) from Arabidopsis thaliana (Mouse-ear cress).